A 299-amino-acid chain; its full sequence is Ficolin-3 (299 aa).

An N-terminal signal peptide occupies residues 1–23 (MDLLWILPSLWLLLLGGPACLKT). The tract at residues 44-81 (PSCPGAPGSPGEKGAPGPQGPPGPPGKMGPKGEPGDPV) is disordered. Residues 48 to 80 (GAPGSPGEKGAPGPQGPPGPPGKMGPKGEPGDP) enclose the Collagen-like domain. Hydroxyproline occurs at positions 50, 53, 59, 65, 68, and 77. A compositionally biased stretch (pro residues) spans 61-70 (PQGPPGPPGK). The 216-residue stretch at 84 to 299 (LRCQEGPRNC…PYRRVRMMLR (216 aa)) folds into the Fibrinogen C-terminal domain. Intrachain disulfides connect cysteine 86/cysteine 110 and cysteine 93/cysteine 121. A glycan (N-linked (GlcNAc...) (complex) asparagine) is linked at asparagine 189. 4 residues coordinate Ca(2+): aspartate 237, aspartate 239, serine 241, and serine 243. Cysteines 245 and 258 form a disulfide. 258–259 (CY) contributes to the a carbohydrate binding site.

The protein belongs to the ficolin lectin family. As to quaternary structure, homotrimer. May form an octadecamer consisting of an elementary trimer unit. Does not interact with fibronectin, elastin or zymosan. Interacts with MASP1 and MASP2. In terms of processing, the N-terminus is blocked. In terms of tissue distribution, liver and lung. In liver it is produced by bile duct epithelial cells and hepatocytes. In lung it is produced by both ciliated bronchial epithelial cells and type II alveolar epithelial cells.

Its subcellular location is the secreted. May function in innate immunity through activation of the lectin complement pathway. Calcium-dependent and GlcNAc-binding lectin. Has affinity with GalNAc, GlcNAc, D-fucose, as mono/oligosaccharide and lipopolysaccharides from S.typhimurium and S.minnesota. The chain is Ficolin-3 (FCN3) from Homo sapiens (Human).